We begin with the raw amino-acid sequence, 214 residues long: Methyltransferase HEMK2 (214 aa).

S-adenosyl-L-methionine is bound by residues Thr29, Glu51, Gly53, Asp77, Asp103, Leu104, and Asn122. Asn122 is a binding site for a protein.

Belongs to the eukaryotic/archaeal PrmC-related family. As to quaternary structure, heterodimer; heterodimerization with TRMT112 is required for S-adenosyl-L-methionine-binding. In terms of processing, ubiquitinated, leading to its degradation by the proteasome. Highly expressed in undifferentiated embryonic stem cells (at protein level). Also expressed in testis and brain, weakly expressed in differentiated embryonic stem cells and kidney. Not expressed in muscle, heart, placenta, pancreas, lung and stomach.

The protein resides in the nucleus. The catalysed reaction is L-lysyl-[histone] + S-adenosyl-L-methionine = N(6)-methyl-L-lysyl-[histone] + S-adenosyl-L-homocysteine + H(+). It catalyses the reaction L-glutaminyl-[protein] + S-adenosyl-L-methionine = N(5)-methyl-L-glutaminyl-[protein] + S-adenosyl-L-homocysteine + H(+). The enzyme catalyses methylarsonous acid + S-adenosyl-L-methionine = dimethylarsinate + S-adenosyl-L-homocysteine + 2 H(+). Functionally, methyltransferase that can methylate proteins and, to a lower extent, arsenic. Catalytic subunit of a heterodimer with TRMT112, which monomethylates 'Lys-12' of histone H4 (H4K12me1), a modification present at the promoters of numerous genes encoding cell cycle regulators. Catalytic subunit of a heterodimer with TRMT112, which catalyzes N5-methylation of Glu residue of proteins with a Gly-Gln-Xaa-Xaa-Xaa-Arg motif. Methylates ETF1 on 'Gln-185'; ETF1 needs to be complexed to ERF3 in its GTP-bound form to be efficiently methylated. May also play a role in the modulation of arsenic-induced toxicity by mediating the conversion of monomethylarsonous acid (3+) into the less toxic dimethylarsonic acid. It however only plays a limited role in arsenic metabolism compared with AS3MT. The chain is Methyltransferase HEMK2 from Mus musculus (Mouse).